We begin with the raw amino-acid sequence, 85 residues long: UPF0297 protein lhv_0439 (85 aa).

It belongs to the UPF0297 family.

In Lactobacillus helveticus (strain DPC 4571), this protein is UPF0297 protein lhv_0439.